The following is a 228-amino-acid chain: Carboxy-S-adenosyl-L-methionine synthase (228 aa).

S-adenosyl-L-methionine is bound by residues Y30, G55–S57, D79–N80, and D103–V104.

The protein belongs to the class I-like SAM-binding methyltransferase superfamily. Cx-SAM synthase family.

It carries out the reaction prephenate + S-adenosyl-L-methionine = carboxy-S-adenosyl-L-methionine + 3-phenylpyruvate + H2O. In terms of biological role, catalyzes the conversion of S-adenosyl-L-methionine (SAM) to carboxy-S-adenosyl-L-methionine (Cx-SAM). The chain is Carboxy-S-adenosyl-L-methionine synthase from Staphylococcus epidermidis (strain ATCC 35984 / DSM 28319 / BCRC 17069 / CCUG 31568 / BM 3577 / RP62A).